The primary structure comprises 345 residues: Anthranilate phosphoribosyltransferase (345 aa).

5-phospho-alpha-D-ribose 1-diphosphate contacts are provided by residues Gly80, 83–84 (GD), Thr88, 90–93 (NIST), 108–116 (KHGNRSVSS), and Ser120. Gly80 contacts anthranilate. Position 92 (Ser92) interacts with Mg(2+). Asn111 provides a ligand contact to anthranilate. Residue Arg166 participates in anthranilate binding. Mg(2+)-binding residues include Asp225 and Glu226.

Belongs to the anthranilate phosphoribosyltransferase family. Homodimer. Mg(2+) is required as a cofactor.

It carries out the reaction N-(5-phospho-beta-D-ribosyl)anthranilate + diphosphate = 5-phospho-alpha-D-ribose 1-diphosphate + anthranilate. It participates in amino-acid biosynthesis; L-tryptophan biosynthesis; L-tryptophan from chorismate: step 2/5. Catalyzes the transfer of the phosphoribosyl group of 5-phosphorylribose-1-pyrophosphate (PRPP) to anthranilate to yield N-(5'-phosphoribosyl)-anthranilate (PRA). This chain is Anthranilate phosphoribosyltransferase, found in Desulforamulus reducens (strain ATCC BAA-1160 / DSM 100696 / MI-1) (Desulfotomaculum reducens).